A 403-amino-acid polypeptide reads, in one-letter code: Imidazolonepropionase (403 aa).

The Fe(3+) site is built by His74 and His76. Residues His74 and His76 each coordinate Zn(2+). 4-imidazolone-5-propanoate is bound by residues Arg83, Tyr146, and His179. Tyr146 contacts N-formimidoyl-L-glutamate. Residue His242 coordinates Fe(3+). His242 contributes to the Zn(2+) binding site. A 4-imidazolone-5-propanoate-binding site is contributed by Gln245. Asp317 contributes to the Fe(3+) binding site. Asp317 is a Zn(2+) binding site. Positions 319 and 321 each coordinate N-formimidoyl-L-glutamate. 4-imidazolone-5-propanoate is bound at residue Thr322.

This sequence belongs to the metallo-dependent hydrolases superfamily. HutI family. Requires Zn(2+) as cofactor. Fe(3+) serves as cofactor.

Its subcellular location is the cytoplasm. The catalysed reaction is 4-imidazolone-5-propanoate + H2O = N-formimidoyl-L-glutamate. It functions in the pathway amino-acid degradation; L-histidine degradation into L-glutamate; N-formimidoyl-L-glutamate from L-histidine: step 3/3. Catalyzes the hydrolytic cleavage of the carbon-nitrogen bond in imidazolone-5-propanoate to yield N-formimidoyl-L-glutamate. It is the third step in the universal histidine degradation pathway. The sequence is that of Imidazolonepropionase from Sphingopyxis alaskensis (strain DSM 13593 / LMG 18877 / RB2256) (Sphingomonas alaskensis).